The chain runs to 268 residues: GTP cyclohydrolase FolE2 (268 aa).

Belongs to the GTP cyclohydrolase IV family.

It catalyses the reaction GTP + H2O = 7,8-dihydroneopterin 3'-triphosphate + formate + H(+). It functions in the pathway cofactor biosynthesis; 7,8-dihydroneopterin triphosphate biosynthesis; 7,8-dihydroneopterin triphosphate from GTP: step 1/1. Converts GTP to 7,8-dihydroneopterin triphosphate. The sequence is that of GTP cyclohydrolase FolE2 from Paraburkholderia phymatum (strain DSM 17167 / CIP 108236 / LMG 21445 / STM815) (Burkholderia phymatum).